A 335-amino-acid polypeptide reads, in one-letter code: Methionine import ATP-binding protein MetN (335 aa).

One can recognise an ABC transporter domain in the interval 2–241 (IQFQRLHKSY…PKHATTRRFV (240 aa)). 38–45 (GHSGAGKS) is a binding site for ATP.

The protein belongs to the ABC transporter superfamily. Methionine importer (TC 3.A.1.24) family. The complex is composed of two ATP-binding proteins (MetN), two transmembrane proteins (MetI) and a solute-binding protein (MetQ).

The protein localises to the cell inner membrane. It carries out the reaction L-methionine(out) + ATP + H2O = L-methionine(in) + ADP + phosphate + H(+). The enzyme catalyses D-methionine(out) + ATP + H2O = D-methionine(in) + ADP + phosphate + H(+). Its function is as follows. Part of the ABC transporter complex MetNIQ involved in methionine import. Responsible for energy coupling to the transport system. This Xanthomonas axonopodis pv. citri (strain 306) protein is Methionine import ATP-binding protein MetN.